A 413-amino-acid polypeptide reads, in one-letter code: Short-chain specific acyl-CoA dehydrogenase, mitochondrial (413 aa).

The transit peptide at 1–24 (MAAALLARACGPVRGALWPRDCRR) directs the protein to the mitochondrion. Position 27 is a phosphothreonine (Thr27). Lys51 is subject to N6-acetyllysine; alternate. At Lys51 the chain carries N6-succinyllysine; alternate. Position 72 is an N6-acetyllysine (Lys72). N6-acetyllysine; alternate is present on Lys129. N6-succinyllysine; alternate is present on Lys129. Residues 152–161 (FALSEPGNGS) and 185–187 (WIT) each bind FAD. Ser161 provides a ligand contact to substrate. The residue at position 208 (Lys208) is an N6-acetyllysine. Lys262 carries the post-translational modification N6-acetyllysine; alternate. Lys262 is subject to N6-succinyllysine; alternate. 269–272 (DMGR) serves as a coordination point for substrate. Arg297 contacts FAD. Lys306 carries the N6-acetyllysine; alternate modification. Lys306 is subject to N6-succinyllysine; alternate. FAD contacts are provided by residues Gln308 and 366-370 (QILGG). Glu393 acts as the Proton acceptor in catalysis. Gly394 contributes to the substrate binding site. FAD is bound at residue 395 to 397 (TSE).

The protein belongs to the acyl-CoA dehydrogenase family. In terms of assembly, homotetramer. FAD is required as a cofactor.

It is found in the mitochondrion matrix. It catalyses the reaction a short-chain 2,3-saturated fatty acyl-CoA + oxidized [electron-transfer flavoprotein] + H(+) = a short-chain (2E)-enoyl-CoA + reduced [electron-transfer flavoprotein]. It carries out the reaction butanoyl-CoA + oxidized [electron-transfer flavoprotein] + H(+) = (2E)-butenoyl-CoA + reduced [electron-transfer flavoprotein]. The catalysed reaction is pentanoyl-CoA + oxidized [electron-transfer flavoprotein] + H(+) = (2E)-pentenoyl-CoA + reduced [electron-transfer flavoprotein]. The enzyme catalyses hexanoyl-CoA + oxidized [electron-transfer flavoprotein] + H(+) = (2E)-hexenoyl-CoA + reduced [electron-transfer flavoprotein]. The protein operates within lipid metabolism; mitochondrial fatty acid beta-oxidation. Its function is as follows. Short-chain specific acyl-CoA dehydrogenase is one of the acyl-CoA dehydrogenases that catalyze the first step of mitochondrial fatty acid beta-oxidation, an aerobic process breaking down fatty acids into acetyl-CoA and allowing the production of energy from fats. The first step of fatty acid beta-oxidation consists in the removal of one hydrogen from C-2 and C-3 of the straight-chain fatty acyl-CoA thioester, resulting in the formation of trans-2-enoyl-CoA. Among the different mitochondrial acyl-CoA dehydrogenases, short-chain specific acyl-CoA dehydrogenase acts specifically on acyl-CoAs with saturated 4 to 6 carbons long primary chains. In Sus scrofa (Pig), this protein is Short-chain specific acyl-CoA dehydrogenase, mitochondrial (ACADS).